Reading from the N-terminus, the 326-residue chain is NADH-quinone oxidoreductase subunit H (326 aa).

8 helical membrane-spanning segments follow: residues 11–31 (ILLS…CGAF), 81–101 (VIFT…FAIV), 114–134 (IGIL…LFAG), 154–174 (LSYE…AGSF), 186–206 (LWNV…GVAV), 237–257 (FFVG…TLFF), 265–285 (LPPF…FILI), and 302–322 (WKVC…VILW).

This sequence belongs to the complex I subunit 1 family. In terms of assembly, NDH-1 is composed of 13 different subunits. Subunits NuoA, H, J, K, L, M, N constitute the membrane sector of the complex.

It localises to the cell inner membrane. It catalyses the reaction a quinone + NADH + 5 H(+)(in) = a quinol + NAD(+) + 4 H(+)(out). In terms of biological role, NDH-1 shuttles electrons from NADH, via FMN and iron-sulfur (Fe-S) centers, to quinones in the respiratory chain. The immediate electron acceptor for the enzyme in this species is believed to be ubiquinone. Couples the redox reaction to proton translocation (for every two electrons transferred, four hydrogen ions are translocated across the cytoplasmic membrane), and thus conserves the redox energy in a proton gradient. This subunit may bind ubiquinone. The polypeptide is NADH-quinone oxidoreductase subunit H (Cronobacter sakazakii (strain ATCC BAA-894) (Enterobacter sakazakii)).